A 223-amino-acid chain; its full sequence is Peptidyl-tRNA hydrolase (223 aa).

Position 14 (tyrosine 14) interacts with tRNA. Residue histidine 19 is the Proton acceptor of the active site. TRNA-binding residues include tyrosine 64, asparagine 66, and asparagine 112. Residues 183–223 (MNVRNTRPKPGKRQKGEGDGSTDPAPAAKEGKGPLPPTQKP) are disordered.

The protein belongs to the PTH family. In terms of assembly, monomer.

Its subcellular location is the cytoplasm. It carries out the reaction an N-acyl-L-alpha-aminoacyl-tRNA + H2O = an N-acyl-L-amino acid + a tRNA + H(+). In terms of biological role, hydrolyzes ribosome-free peptidyl-tRNAs (with 1 or more amino acids incorporated), which drop off the ribosome during protein synthesis, or as a result of ribosome stalling. Catalyzes the release of premature peptidyl moieties from peptidyl-tRNA molecules trapped in stalled 50S ribosomal subunits, and thus maintains levels of free tRNAs and 50S ribosomes. This Sorangium cellulosum (strain So ce56) (Polyangium cellulosum (strain So ce56)) protein is Peptidyl-tRNA hydrolase.